Reading from the N-terminus, the 127-residue chain is UPF0102 protein Mmwyl1_2395 (127 aa).

Belongs to the UPF0102 family.

The protein is UPF0102 protein Mmwyl1_2395 of Marinomonas sp. (strain MWYL1).